The primary structure comprises 480 residues: MNRKLFMTGLLMLAMTMQAQTAKKFTLNLSDDGKAQMVCFLPENPSGRAIVGVPGGGYSMLSNTHEGYQASDWLNKQGIAYFVVNYRLPHGDRTIPVGDVEQGFRIVRDSAKVWNINPNDVGIMGFSAGGHLSSVISTMSPYEVRPNFSILFYPVISMDERVSHKWSCINFLGKEGYKDPKLIGQYSTQNAVRSHLTPPACIISANDDRLVPVVTNGIQYYSAMRNAGNECSLFIYPSGDHGFGFGTWFKYHDQLLQDLGNWLKSIPAPKEDAIRVACIGNSITDGFGIDMRAKYGYPAQLQGILGDGYWVKNFGVSARTMLNKGDFPYMNEMAWKDALAFKPDVVVIKLGTNDSKPENWQYGSEFRQDLEQMIKALRPDLAQPAKKGKKKAKAAAQPAGPKILLCTPIPAFKPSWNINDKVITDEIIPIQQEVAKQYGLQIIDLHALMLNDGDKVVDDGIHPNEKGAKKMAEIIAAAIK.

The signal sequence occupies residues 1–19 (MNRKLFMTGLLMLAMTMQA).

It belongs to the AB hydrolase superfamily.

It carries out the reaction Deacetylation of xylans and xylo-oligosaccharides.. The protein operates within glycan degradation; xylan degradation. Involved in degradation of plant cell wall polysaccharides. Is an acetyl esterase with broad substrate specificity, releasing acetic acid from acetylated xylo-oligosaccharides and acetylated xylan as well as xylose-tetraacetate, 4-O-methylumbelliferyl acetate, glucose-pentaacetate, and cephalosporin C. Appears to have greater activity on oligosaccharides than on polymeric substrates. Is also able to release acetic acid from xylo-oligosaccharides with 4-O-methylglucuronic acid side groups proximally located to O-acetyl esters. Preferentially targets xylo-oligosaccharides possessing three or more O-acetyl groups, but following their depletion it is active on the less acetylated portion of the substrate. This is Acetylxylan esterase from Xylanibacter ruminicola (strain ATCC 19189 / DSM 19721 / CIP 105475 / JCM 8958 / 23) (Prevotella ruminicola).